Consider the following 240-residue polypeptide: Probable Ni/Fe-hydrogenase B-type cytochrome subunit (240 aa).

4 helical membrane-spanning segments follow: residues 31–51 (LWHW…YFIG), 75–95 (FAAG…AFVG), 142–163 (LAMF…FALY), and 196–213 (LGMW…YLAA).

It belongs to the HupC/HyaC/HydC family.

Its subcellular location is the cell membrane. Probable b-type cytochrome. This is Probable Ni/Fe-hydrogenase B-type cytochrome subunit (hupZ) from Azotobacter chroococcum mcd 1.